The primary structure comprises 1444 residues: Probable serine/threonine-protein kinase irlC (1444 aa).

Residues Thr335–Lys370 form a disordered region. Positions Asn338–Asn368 are enriched in low complexity. An SWIM-type zinc finger spans residues Phe495–Tyr529. Positions Thr584–Glu613 are enriched in low complexity. 2 disordered regions span residues Thr584 to Lys619 and Gln864 to Ile938. 2 coiled-coil regions span residues Asn593–Glu620 and Ile847–Ile879. Over residues Gln864–Lys876 the composition is skewed to basic residues. Over residues Ser885 to Pro937 the composition is skewed to low complexity. In terms of domain architecture, Protein kinase spans Arg981 to Phe1246. ATP-binding positions include Leu987–Leu995 and Lys1010. Asp1116 functions as the Proton acceptor in the catalytic mechanism. The KEN domain occupies Asn1279–Lys1444.

This sequence belongs to the protein kinase superfamily. Ser/Thr protein kinase family.

The catalysed reaction is L-seryl-[protein] + ATP = O-phospho-L-seryl-[protein] + ADP + H(+). It catalyses the reaction L-threonyl-[protein] + ATP = O-phospho-L-threonyl-[protein] + ADP + H(+). The polypeptide is Probable serine/threonine-protein kinase irlC (irlC) (Dictyostelium discoideum (Social amoeba)).